Consider the following 538-residue polypeptide: Phosphoenolpyruvate carboxykinase (ATP) (538 aa).

Substrate-binding residues include Arg64, Tyr205, and Lys211. ATP is bound by residues Lys211, His230, and 246–254 (GLSGTGKTT). 2 residues coordinate Mn(2+): Lys211 and His230. Asp267 is a binding site for Mn(2+). ATP contacts are provided by residues Glu295, Arg331, 447–448 (RI), and Thr453. A substrate-binding site is contributed by Arg331.

The protein belongs to the phosphoenolpyruvate carboxykinase (ATP) family. As to quaternary structure, monomer. The cofactor is Mn(2+).

It localises to the cytoplasm. It carries out the reaction oxaloacetate + ATP = phosphoenolpyruvate + ADP + CO2. Its pathway is carbohydrate biosynthesis; gluconeogenesis. In terms of biological role, involved in the gluconeogenesis. Catalyzes the conversion of oxaloacetate (OAA) to phosphoenolpyruvate (PEP) through direct phosphoryl transfer between the nucleoside triphosphate and OAA. The sequence is that of Phosphoenolpyruvate carboxykinase (ATP) from Mannheimia succiniciproducens (strain KCTC 0769BP / MBEL55E).